A 454-amino-acid polypeptide reads, in one-letter code: Bifunctional protein GlmU (454 aa).

The interval 1–226 (MALNVVILAA…AVEVEGANNR (226 aa)) is pyrophosphorylase. Residues 8 to 11 (LAAG), K22, Q73, 78 to 79 (GT), 100 to 102 (YGD), G137, E151, N166, and N224 contribute to the UDP-N-acetyl-alpha-D-glucosamine site. Residue D102 coordinates Mg(2+). N224 is a binding site for Mg(2+). Residues 227 to 247 (VQLAQLERAYQARAAEKLMLE) are linker. The interval 248–454 (GANLRDPARI…GWPRPVKLKK (207 aa)) is N-acetyltransferase. The UDP-N-acetyl-alpha-D-glucosamine site is built by R330 and K348. H360 serves as the catalytic Proton acceptor. Y363 and N374 together coordinate UDP-N-acetyl-alpha-D-glucosamine. Acetyl-CoA contacts are provided by residues A377, 383-384 (NY), S402, A420, and R437.

The protein in the N-terminal section; belongs to the N-acetylglucosamine-1-phosphate uridyltransferase family. This sequence in the C-terminal section; belongs to the transferase hexapeptide repeat family. As to quaternary structure, homotrimer. It depends on Mg(2+) as a cofactor.

The protein resides in the cytoplasm. It carries out the reaction alpha-D-glucosamine 1-phosphate + acetyl-CoA = N-acetyl-alpha-D-glucosamine 1-phosphate + CoA + H(+). The catalysed reaction is N-acetyl-alpha-D-glucosamine 1-phosphate + UTP + H(+) = UDP-N-acetyl-alpha-D-glucosamine + diphosphate. Its pathway is nucleotide-sugar biosynthesis; UDP-N-acetyl-alpha-D-glucosamine biosynthesis; N-acetyl-alpha-D-glucosamine 1-phosphate from alpha-D-glucosamine 6-phosphate (route II): step 2/2. It participates in nucleotide-sugar biosynthesis; UDP-N-acetyl-alpha-D-glucosamine biosynthesis; UDP-N-acetyl-alpha-D-glucosamine from N-acetyl-alpha-D-glucosamine 1-phosphate: step 1/1. It functions in the pathway bacterial outer membrane biogenesis; LPS lipid A biosynthesis. Functionally, catalyzes the last two sequential reactions in the de novo biosynthetic pathway for UDP-N-acetylglucosamine (UDP-GlcNAc). The C-terminal domain catalyzes the transfer of acetyl group from acetyl coenzyme A to glucosamine-1-phosphate (GlcN-1-P) to produce N-acetylglucosamine-1-phosphate (GlcNAc-1-P), which is converted into UDP-GlcNAc by the transfer of uridine 5-monophosphate (from uridine 5-triphosphate), a reaction catalyzed by the N-terminal domain. In Shewanella pealeana (strain ATCC 700345 / ANG-SQ1), this protein is Bifunctional protein GlmU.